The following is a 532-amino-acid chain: Pentatricopeptide repeat-containing protein At5g66500, mitochondrial (532 aa).

A mitochondrion-targeting transit peptide spans 1-33 (MFACLRIGRFIRLGNVTVKSTNLVLRCVFIRNF). 12 PPR repeats span residues 48–82 (DLSS…SPDL), 83–117 (SSHT…GAET), 118–148 (GTIS…VEEK), 149–183 (DLVS…RVEI), 184–218 (SEFT…GRDL), 223–248 (TAMI…LNVH), 250–280 (DEVM…QRPN), 281–314 (VRVL…GFVS), 315–345 (DSKL…IPSK), 346–380 (SVVS…GSGV), 383–413 (NSVT…MKEK), and 419–453 (GTEH…DNQS). Positions 458–532 (IWVAVLSACS…VKTAGHSLFI (75 aa)) are type E motif; degenerate.

Belongs to the PPR family. PCMP-E subfamily.

The protein localises to the mitochondrion. This Arabidopsis thaliana (Mouse-ear cress) protein is Pentatricopeptide repeat-containing protein At5g66500, mitochondrial (PCMP-E38).